A 255-amino-acid chain; its full sequence is Gene 54 protein (255 aa).

The chain is Gene 54 protein (54) from Mycobacterium (Mycobacteriophage L5).